A 165-amino-acid chain; its full sequence is MTIAVYPASFDPITNGHLDVAARASRLFDELVLAVAHRPYKKLLFTTEQRIAMIRESVAHLPNVRVDAFSSLVVEYALEIGATVLVRGLRAATDFEHEFQMAHINHHLAPTLDTVCLMADQRFTLLSSSAVREIAAYGGDVSSFVPAHIALALKQAYQTHEESRA.

Ser-9 contributes to the substrate binding site. Residues 9 to 10 and His-17 each bind ATP; that span reads SF. Substrate-binding residues include Lys-41, Val-73, and Arg-87. ATP is bound by residues 88-90, Glu-98, and 123-129; these read GLR and FTLLSSS.

It belongs to the bacterial CoaD family. In terms of assembly, homohexamer. Mg(2+) serves as cofactor.

Its subcellular location is the cytoplasm. It carries out the reaction (R)-4'-phosphopantetheine + ATP + H(+) = 3'-dephospho-CoA + diphosphate. It participates in cofactor biosynthesis; coenzyme A biosynthesis; CoA from (R)-pantothenate: step 4/5. Reversibly transfers an adenylyl group from ATP to 4'-phosphopantetheine, yielding dephospho-CoA (dPCoA) and pyrophosphate. The chain is Phosphopantetheine adenylyltransferase from Herpetosiphon aurantiacus (strain ATCC 23779 / DSM 785 / 114-95).